A 464-amino-acid polypeptide reads, in one-letter code: Chitotriosidase-1 (464 aa).

A signal peptide spans 1-21 (MVQSLAWAGVMTLLMVQWGSA). Residues 22-386 (AKLVCYLTNW…RTLRQELNLP (365 aa)) form the GH18 domain. Cys-26 and Cys-51 are oxidised to a cystine. Chitin-binding positions include 70-71 (EH) and 97-100 (GGWT). Glu-140 functions as the Proton donor in the catalytic mechanism. 210–213 (MAYD) is a chitin binding site. The cysteines at positions 307 and 368 are disulfide-linked. The segment at 385-416 (LPSETPRSPEQIIPEPRPSSMPEQGPSPGLDN) is disordered. Residues 415–464 (DNFCQGKADGVYPNPGDESTYYNCGGGRLFQQSCPPGLVFRASCKCCTWS) enclose the Chitin-binding type-2 domain. Residues Cys-448 and Cys-461 are joined by a disulfide bond.

This sequence belongs to the glycosyl hydrolase 18 family. Chitinase class II subfamily. As to quaternary structure, monomer. In terms of tissue distribution, highly expressed in tongue, stomach, kidney, brain, skin, testis, and bone marrow. Low level of expression was found in lung, heart, spleen, small intestine, and liver. Not detectable in pancreas, salivary gland, large intestine, uterus, or peripheral blood mononuclear cells (PBMC).

It localises to the secreted. The protein resides in the lysosome. The catalysed reaction is Random endo-hydrolysis of N-acetyl-beta-D-glucosaminide (1-&gt;4)-beta-linkages in chitin and chitodextrins.. In terms of biological role, degrades chitin, chitotriose and chitobiose. May participate in the defense against nematodes and other pathogens. The chain is Chitotriosidase-1 (Chit1) from Mus musculus (Mouse).